Here is a 267-residue protein sequence, read N- to C-terminus: Carboxy-S-adenosyl-L-methionine synthase (267 aa).

Residues 1 to 11 (MPNRDTQSQND) show a composition bias toward polar residues. The tract at residues 1-25 (MPNRDTQSQNDTPRHSPEAAEPQRD) is disordered. Residues 12 to 24 (TPRHSPEAAEPQR) show a composition bias toward basic and acidic residues. S-adenosyl-L-methionine contacts are provided by residues Tyr-59, 84–86 (GCS), 109–110 (DN), 137–138 (DI), Asn-152, and Arg-219.

The protein belongs to the class I-like SAM-binding methyltransferase superfamily. Cx-SAM synthase family. As to quaternary structure, homodimer.

The enzyme catalyses prephenate + S-adenosyl-L-methionine = carboxy-S-adenosyl-L-methionine + 3-phenylpyruvate + H2O. Catalyzes the conversion of S-adenosyl-L-methionine (SAM) to carboxy-S-adenosyl-L-methionine (Cx-SAM). The polypeptide is Carboxy-S-adenosyl-L-methionine synthase (Yersinia pseudotuberculosis serotype O:1b (strain IP 31758)).